Reading from the N-terminus, the 61-residue chain is DNA gyrase inhibitor YacG (61 aa).

Positions 14, 17, 29, and 33 each coordinate Zn(2+).

The protein belongs to the DNA gyrase inhibitor YacG family. In terms of assembly, interacts with GyrB. Zn(2+) is required as a cofactor.

Functionally, inhibits all the catalytic activities of DNA gyrase by preventing its interaction with DNA. Acts by binding directly to the C-terminal domain of GyrB, which probably disrupts DNA binding by the gyrase. This chain is DNA gyrase inhibitor YacG, found in Zymomonas mobilis subsp. mobilis (strain ATCC 31821 / ZM4 / CP4).